The chain runs to 637 residues: Conglutin beta 5 (637 aa).

The signal sequence occupies residues 1–30; it reads MAKMRVRFPMLVLLLGVVFLLAVSIGIAYG. Basic and acidic residues-rich tracts occupy residues 33-105, 136-174, and 184-203; these read DVIK…REQE, RREE…REQE, and DYGR…REQE. 2 disordered regions span residues 33-221 and 384-439; these read DVIK…YFSS and EQED…LRSN. The Cupin type-1 1 domain maps to 217–375; it reads YYFSSERFQT…TFNTHYEEIQ (159 aa). Over residues 389-417 the composition is skewed to basic and acidic residues; the sequence is EQRREQEQSHQDEGVIVRVSKEQIQELRK. The 161-residue stretch at 434 to 594 folds into the Cupin type-1 2 domain; that stretch reads FNLRSNEPIY…IFPGSAEDVE (161 aa). Asparagine 544 is a glycosylation site (N-linked (GlcNAc...) asparagine). Low complexity predominate over residues 606 to 615; sequence ANAQPQQQQQ. The interval 606 to 626 is disordered; sequence ANAQPQQQQQQREKEGRRGRR.

It belongs to the 7S seed storage protein family. Component of globulins complexes which accumulate in seeds.

Functionally, seed storage protein. Accumulates during seed development and is hydrolyzed after germination to provide a carbon and nitrogen source for the developing seedling. The polypeptide is Conglutin beta 5 (Lupinus angustifolius (Narrow-leaved blue lupine)).